The sequence spans 228 residues: Small ribosomal subunit protein uS3 (228 aa).

The region spanning 39 to 107 is the KH type-2 domain; it reads IRKELNEKLK…PVNINIEEIK (69 aa).

Belongs to the universal ribosomal protein uS3 family. As to quaternary structure, part of the 30S ribosomal subunit. Forms a tight complex with proteins S10 and S14.

Binds the lower part of the 30S subunit head. Binds mRNA in the 70S ribosome, positioning it for translation. This Hydrogenovibrio crunogenus (strain DSM 25203 / XCL-2) (Thiomicrospira crunogena) protein is Small ribosomal subunit protein uS3.